We begin with the raw amino-acid sequence, 275 residues long: MGGKMNFQSKFLTRSQSLKSLLCVGLDPDFDKLPEIVKRSPEPLVQFCKEIIDATASYAVAYKPNIAFFEVFGSSGIRQFEKVIGHLKSNYPQIPIVADVKRGDLDNTARQYAKYYFGDLQVDSLTLSPYMGLDSIRPFLEYQDYLIFWLCLTSNPDSAQFQKKRFSETGRTLYEEVVYVANLVAISNLGFVVGATSPSELETLRTQNPNRIFLIPGFGAQGAKLENLLPVCGRNSLINSSRGIHFASNGSDFAVRAGQEAEKIHKMMQTHFIGL.

Residue Lys-101 is the Proton donor of the active site.

It belongs to the OMP decarboxylase family. Type 2 subfamily.

It carries out the reaction orotidine 5'-phosphate + H(+) = UMP + CO2. Its pathway is pyrimidine metabolism; UMP biosynthesis via de novo pathway; UMP from orotate: step 2/2. This chain is Orotidine 5'-phosphate decarboxylase, found in Leptospira interrogans serogroup Icterohaemorrhagiae serovar Lai (strain 56601).